Here is a 303-residue protein sequence, read N- to C-terminus: Methionyl-tRNA formyltransferase (303 aa).

108-111 provides a ligand contact to (6S)-5,6,7,8-tetrahydrofolate; the sequence is SDLP.

Belongs to the Fmt family.

It carries out the reaction L-methionyl-tRNA(fMet) + (6R)-10-formyltetrahydrofolate = N-formyl-L-methionyl-tRNA(fMet) + (6S)-5,6,7,8-tetrahydrofolate + H(+). Attaches a formyl group to the free amino group of methionyl-tRNA(fMet). The formyl group appears to play a dual role in the initiator identity of N-formylmethionyl-tRNA by promoting its recognition by IF2 and preventing the misappropriation of this tRNA by the elongation apparatus. This Rickettsia africae (strain ESF-5) protein is Methionyl-tRNA formyltransferase.